Consider the following 235-residue polypeptide: Ribosomal RNA large subunit methyltransferase E (235 aa).

The S-adenosyl-L-methionine site is built by glycine 76, tryptophan 78, aspartate 99, aspartate 115, and aspartate 139. The active-site Proton acceptor is lysine 179.

The protein belongs to the class I-like SAM-binding methyltransferase superfamily. RNA methyltransferase RlmE family.

It is found in the cytoplasm. It carries out the reaction uridine(2552) in 23S rRNA + S-adenosyl-L-methionine = 2'-O-methyluridine(2552) in 23S rRNA + S-adenosyl-L-homocysteine + H(+). Functionally, specifically methylates the uridine in position 2552 of 23S rRNA at the 2'-O position of the ribose in the fully assembled 50S ribosomal subunit. This chain is Ribosomal RNA large subunit methyltransferase E, found in Rhodopseudomonas palustris (strain BisA53).